The primary structure comprises 459 residues: DnaJ protein homolog XDJ1 (459 aa).

A J domain is found at 7–79 (GDRLYDVLGV…KSHYDLYGDD (73 aa)). The segment at 146-240 (GKKLKFDLKR…CAGLGLLSKK (95 aa)) adopts a CR-type zinc-finger fold. CXXCXGXG motif repeat units lie at residues 159–166 (CIKCHGSG), 181–188 (CESCAGKG), 208–215 (CEKCNGKG), and 228–235 (CPDCAGLG).

The protein resides in the mitochondrion outer membrane. The polypeptide is DnaJ protein homolog XDJ1 (XDJ1) (Saccharomyces cerevisiae (strain ATCC 204508 / S288c) (Baker's yeast)).